The sequence spans 816 residues: Stemod-13(17)-ene synthase (816 aa).

Residues Met-1 to Gly-10 show a composition bias toward polar residues. The interval Met-1–Lys-24 is disordered. Mg(2+)-binding residues include Asp-553, Asp-557, Asn-698, Thr-702, and Glu-706. Positions Asp-553–Asp-557 match the DDXXD motif motif.

This sequence belongs to the terpene synthase family. Requires Mg(2+) as cofactor.

It catalyses the reaction 9alpha-copalyl diphosphate = stemod-13(17)-ene + diphosphate. Functionally, catalyzes the conversion of syn-copalyl diphosphate to stemodene. This Oryza sativa subsp. indica (Rice) protein is Stemod-13(17)-ene synthase (KSL11).